The following is a 142-amino-acid chain: MVLSADDKANIKATWEKIGGHGAEYGAEALERMFASFPTTKTYFPHFDVSHGSAQVKSHGKKVADALANAAHHLDDLPGALSALSDLHAHKLRVDPVNFKLLGHCLLVTLATHLQAGLTPAAHASLDKFLASVSTVLTSKYR.

A Globin domain is found at 2–142; the sequence is VLSADDKANI…VSTVLTSKYR (141 aa). The residue at position 4 (Ser-4) is a Phosphoserine. N6-succinyllysine occurs at positions 8 and 12. Lys-17 carries the N6-acetyllysine; alternate modification. Lys-17 bears the N6-succinyllysine; alternate mark. Tyr-25 bears the Phosphotyrosine mark. Position 36 is a phosphoserine (Ser-36). Lys-41 carries the post-translational modification N6-succinyllysine. Ser-50 is modified (phosphoserine). His-59 contacts O2. His-88 contributes to the heme b binding site. Residue Thr-109 is modified to Phosphothreonine. Residues Ser-125 and Ser-132 each carry the phosphoserine modification. Phosphothreonine is present on residues Thr-135 and Thr-138. Residue Ser-139 is modified to Phosphoserine.

This sequence belongs to the globin family. As to quaternary structure, heterotetramer of two alpha chains and two beta chains. Red blood cells.

Involved in oxygen transport from the lung to the various peripheral tissues. Its function is as follows. Hemopressin acts as an antagonist peptide of the cannabinoid receptor CNR1. Hemopressin-binding efficiently blocks cannabinoid receptor CNR1 and subsequent signaling. This is Hemoglobin subunit alpha (HBA) from Cricetomys gambianus (Northern giant pouched rat).